We begin with the raw amino-acid sequence, 479 residues long: FAD-dependent monooxygenase atmM (479 aa).

Residues 10 to 30 (IIVGGSVAGLTLAHCLQRAGI) form a helical membrane-spanning segment. Positions 36, 50, 109, 309, and 322 each coordinate FAD. A helical transmembrane segment spans residues 445–465 (WILVLLVIVVSFGLHSPELVI).

This sequence belongs to the paxM FAD-dependent monooxygenase family. Requires FAD as cofactor.

The protein localises to the membrane. Its pathway is secondary metabolite biosynthesis. In terms of biological role, FAD-dependent monooxygenase; part of the ATM1 gene cluster that mediates the biosynthesis of aflatrem, a tremorgenic mycotoxin with acute neurotoxic effects. Synthesis of geranylgeranyl diphosphate (GGPP) by AtmG (a GGPP synthase) precedes condensation of GGPP with indole 3-glycerol phosphate, followed by epoxidation and cyclization by AtmM (a FAD-dependent monooxygenase) and AtmC (a prenyltransferase) to produce paspaline. AtmB is also essential for paspaline production, but its exact role has not been identified yet. AtmP, a cytochrome P450 monooxygenase, subsequently converts paspaline to 13-desoxypaxilline via PC-M6 by removal of the C-30 methyl group and oxidation at C-10. AtmQ, a cytochrome P450 monooxygenase, then catalyzes the oxidation of 13-desoxypaxilline, first at C-7 to produce paspalicine and then at C-13 to form paspalinine. Finally, AtmD prenylates paspalinine to form aflatrem. In Aspergillus flavus, this protein is FAD-dependent monooxygenase atmM.